The primary structure comprises 128 residues: Flagellar hook-basal body complex protein FliE (128 aa).

Positions 1–60 (MRPVASFRPPPTFSALQGGASSQATKTAGIDQRGTNQAFSLLDPQSTQSNSTDSSFGEMG) are disordered. The span at 33-55 (RGTNQAFSLLDPQSTQSNSTDSS) shows a compositional bias: polar residues.

It belongs to the FliE family.

It localises to the bacterial flagellum basal body. The protein is Flagellar hook-basal body complex protein FliE of Rhodopirellula baltica (strain DSM 10527 / NCIMB 13988 / SH1).